Consider the following 88-residue polypeptide: Small ribosomal subunit protein bS20 (88 aa).

This sequence belongs to the bacterial ribosomal protein bS20 family.

In terms of biological role, binds directly to 16S ribosomal RNA. The sequence is that of Small ribosomal subunit protein bS20 from Micrococcus luteus (strain ATCC 4698 / DSM 20030 / JCM 1464 / CCM 169 / CCUG 5858 / IAM 1056 / NBRC 3333 / NCIMB 9278 / NCTC 2665 / VKM Ac-2230) (Micrococcus lysodeikticus).